A 237-amino-acid polypeptide reads, in one-letter code: Redox-sensing transcriptional repressor Rex (237 aa).

Positions 45-84 form a DNA-binding region, H-T-H motif; that stretch reads LYYRELHRLLAAGESSTNSRDLGAMVNVSPAVVRRDLSSI. 119–124 contacts NAD(+); it reads GVGSLG.

The protein belongs to the transcriptional regulatory Rex family. Homodimer.

It is found in the cytoplasm. Functionally, modulates transcription in response to changes in cellular NADH/NAD(+) redox state. The chain is Redox-sensing transcriptional repressor Rex from Rhodopirellula baltica (strain DSM 10527 / NCIMB 13988 / SH1).